The chain runs to 253 residues: Phosphate import ATP-binding protein PstB (253 aa).

Residues 7–248 (IEVEDLNVYF…PRDKRTEDYI (242 aa)) form the ABC transporter domain. 39 to 46 (GPSGCGKS) is a binding site for ATP.

Belongs to the ABC transporter superfamily. Phosphate importer (TC 3.A.1.7) family. The complex is composed of two ATP-binding proteins (PstB), two transmembrane proteins (PstC and PstA) and a solute-binding protein (PstS).

The protein resides in the cell membrane. The enzyme catalyses phosphate(out) + ATP + H2O = ADP + 2 phosphate(in) + H(+). Part of the ABC transporter complex PstSACB involved in phosphate import. Responsible for energy coupling to the transport system. The protein is Phosphate import ATP-binding protein PstB of Methanothermobacter thermautotrophicus (strain ATCC 29096 / DSM 1053 / JCM 10044 / NBRC 100330 / Delta H) (Methanobacterium thermoautotrophicum).